Reading from the N-terminus, the 509-residue chain is ATP synthase subunit alpha (509 aa).

An ATP-binding site is contributed by 169 to 176; the sequence is GDRQTGKT.

This sequence belongs to the ATPase alpha/beta chains family. F-type ATPases have 2 components, CF(1) - the catalytic core - and CF(0) - the membrane proton channel. CF(1) has five subunits: alpha(3), beta(3), gamma(1), delta(1), epsilon(1). CF(0) has three main subunits: a(1), b(2) and c(9-12). The alpha and beta chains form an alternating ring which encloses part of the gamma chain. CF(1) is attached to CF(0) by a central stalk formed by the gamma and epsilon chains, while a peripheral stalk is formed by the delta and b chains.

It is found in the cell inner membrane. The enzyme catalyses ATP + H2O + 4 H(+)(in) = ADP + phosphate + 5 H(+)(out). Its function is as follows. Produces ATP from ADP in the presence of a proton gradient across the membrane. The alpha chain is a regulatory subunit. This chain is ATP synthase subunit alpha, found in Xanthobacter autotrophicus (strain ATCC BAA-1158 / Py2).